The sequence spans 630 residues: Biosynthetic arginine decarboxylase (630 aa).

Residue Lys-99 is modified to N6-(pyridoxal phosphate)lysine. 279-289 is a substrate binding site; that stretch reads FDVGGGLGVDY.

The protein belongs to the Orn/Lys/Arg decarboxylase class-II family. SpeA subfamily. Mg(2+) is required as a cofactor. It depends on pyridoxal 5'-phosphate as a cofactor.

The enzyme catalyses L-arginine + H(+) = agmatine + CO2. The protein operates within amine and polyamine biosynthesis; agmatine biosynthesis; agmatine from L-arginine: step 1/1. Catalyzes the biosynthesis of agmatine from arginine. The chain is Biosynthetic arginine decarboxylase from Neisseria meningitidis serogroup B (strain ATCC BAA-335 / MC58).